The chain runs to 238 residues: Ribosomal RNA small subunit methyltransferase G (238 aa).

S-adenosyl-L-methionine-binding positions include Gly-77, Phe-82, 128–129 (AE), and Arg-146. The segment at 216–238 (KKRQTPKKYPRKPGTPNKEPLLK) is disordered.

This sequence belongs to the methyltransferase superfamily. RNA methyltransferase RsmG family.

The protein localises to the cytoplasm. Its function is as follows. Specifically methylates the N7 position of guanine in position 535 of 16S rRNA. The chain is Ribosomal RNA small subunit methyltransferase G from Macrococcus caseolyticus (strain JCSC5402) (Macrococcoides caseolyticum).